Consider the following 1299-residue polypeptide: DNA-directed RNA polymerase subunit beta' (1299 aa).

Residues Cys-60, Cys-62, Cys-75, and Cys-78 each contribute to the Zn(2+) site. The interval 188-209 (GAKSDQKRRAKDGAEKEMGQTR) is disordered. Asp-535, Asp-537, and Asp-539 together coordinate Mg(2+). Residues Cys-882, Cys-959, Cys-966, and Cys-969 each contribute to the Zn(2+) site.

It belongs to the RNA polymerase beta' chain family. The RNAP catalytic core consists of 2 alpha, 1 beta, 1 beta' and 1 omega subunit. When a sigma factor is associated with the core the holoenzyme is formed, which can initiate transcription. Mg(2+) serves as cofactor. It depends on Zn(2+) as a cofactor.

It catalyses the reaction RNA(n) + a ribonucleoside 5'-triphosphate = RNA(n+1) + diphosphate. Functionally, DNA-dependent RNA polymerase catalyzes the transcription of DNA into RNA using the four ribonucleoside triphosphates as substrates. The chain is DNA-directed RNA polymerase subunit beta' from Clavibacter sepedonicus (Clavibacter michiganensis subsp. sepedonicus).